The following is a 284-amino-acid chain: MEMO1 family protein SSO0066 (284 aa).

It belongs to the MEMO1 family.

This Saccharolobus solfataricus (strain ATCC 35092 / DSM 1617 / JCM 11322 / P2) (Sulfolobus solfataricus) protein is MEMO1 family protein SSO0066.